The primary structure comprises 447 residues: Tektin-4 (447 aa).

Coiled-coil stretches lie at residues 69 to 144 (ADRD…ALDA) and 304 to 423 (FGRR…TNSL). The segment covering 72–81 (DQSERQRHES) has biased composition (basic and acidic residues). The disordered stretch occupies residues 72-104 (DQSERQRHESQQLAAETEALAQRTQQDSTRKVG). Positions 82-97 (QQLAAETEALAQRTQQ) are enriched in low complexity.

Belongs to the tektin family. As to quaternary structure, microtubule inner protein component of sperm flagellar doublet microtubules. In terms of processing, ubiquitinated, leading to its degradation. Deubiquitinated by USP16, promoting its stability. In terms of tissue distribution, expressed in trachea multiciliated cells.

The protein resides in the cytoplasm. Its subcellular location is the cytoskeleton. It localises to the cilium axoneme. The protein localises to the flagellum axoneme. In terms of biological role, microtubule inner protein (MIP) part of the dynein-decorated doublet microtubules (DMTs) in cilia and flagellar axoneme. Forms filamentous polymers in the walls of ciliary and flagellar microtubules. Contributes to normal sperm motility. The sequence is that of Tektin-4 (TEKT4) from Bos taurus (Bovine).